The following is a 97-amino-acid chain: Class II hydrophobin A (97 aa).

An N-terminal signal peptide occupies residues 1-15; sequence MKSVVFASLIASALA. 3 disulfide bridges follow: C30-C79, C40-C53, and C80-C91.

It belongs to the cerato-ulmin hydrophobin family.

It localises to the secreted. The protein resides in the cell wall. Its subcellular location is the vacuole. It is found in the cytoplasmic vesicle. Aerial growth, conidiation, and dispersal of filamentous fungi in the environment rely upon a capability of their secreting small amphipathic proteins called hydrophobins (HPBs) with low sequence identity. Class I can self-assemble into an outermost layer of rodlet bundles on aerial cell surfaces, conferring cellular hydrophobicity that supports fungal growth, development and dispersal; whereas Class II form highly ordered films at water-air interfaces through intermolecular interactions but contribute nothing to the rodlet structure. Hyd2A contributes to certain cell wall-related features, such as hydrophobicity but is not involved in cell wall-related events during fungal proliferation in host hemocoel. Does not contribute to conidial hydrophobicity. Involved in insect hemocoel colonization independent of cell hydrophobicity, as well as in the asexual development. The sequence is that of Class II hydrophobin A from Beauveria bassiana (strain ARSEF 2860) (White muscardine disease fungus).